The primary structure comprises 265 residues: Thiazole synthase (265 aa).

Lysine 106 functions as the Schiff-base intermediate with DXP in the catalytic mechanism. 1-deoxy-D-xylulose 5-phosphate contacts are provided by residues glycine 167, 193–194 (AG), and 215–216 (NS).

Belongs to the ThiG family. In terms of assembly, homotetramer. Forms heterodimers with either ThiH or ThiS.

It is found in the cytoplasm. The catalysed reaction is [ThiS sulfur-carrier protein]-C-terminal-Gly-aminoethanethioate + 2-iminoacetate + 1-deoxy-D-xylulose 5-phosphate = [ThiS sulfur-carrier protein]-C-terminal Gly-Gly + 2-[(2R,5Z)-2-carboxy-4-methylthiazol-5(2H)-ylidene]ethyl phosphate + 2 H2O + H(+). It functions in the pathway cofactor biosynthesis; thiamine diphosphate biosynthesis. In terms of biological role, catalyzes the rearrangement of 1-deoxy-D-xylulose 5-phosphate (DXP) to produce the thiazole phosphate moiety of thiamine. Sulfur is provided by the thiocarboxylate moiety of the carrier protein ThiS. In vitro, sulfur can be provided by H(2)S. This Prochlorococcus marinus subsp. pastoris (strain CCMP1986 / NIES-2087 / MED4) protein is Thiazole synthase.